We begin with the raw amino-acid sequence, 427 residues long: MTDTNLDFLAQTDPTLAAMIQGELQRQREHLELIASENFTSPAVLAAQGSVLTNKYAEGLPKKRYYGGCEWVDQAEQLAIDRAKELFGAAHANVQPHSGAQANFAVFLALLNPGDTIMGMDLSHGGHLTHGSPVNVSGKWFKVSHYGVSPDTERLDYDSILELAKKEKPKLLICGYSAYPRIIEFDKFRAIADEVGAYLMADIAHIAGLVASGHHPNPLPYCDVVTTTTHKTLRGPRGGLIMTNNPELGKQFDKAVFPGTQGGPLEQVIAAKAVAFGEALKPEFKVYSGQVIANAQALANQLNQRGFKLVSGGTDNHLMLVDLRCIDMTGKEADKLVSEINITANKNTVPFDPESPFVTSGLRLGSPAMTTRGLGVEEFREIGNIIADCLLNRNDEAVKKDCLNRVKALCDRFPLYPHLNIPVPVLA.

(6S)-5,6,7,8-tetrahydrofolate is bound by residues Leu-122 and 126-128; that span reads GHL. An N6-(pyridoxal phosphate)lysine modification is found at Lys-231. (6S)-5,6,7,8-tetrahydrofolate contacts are provided by residues Glu-247 and 355 to 357; that span reads SPF.

Belongs to the SHMT family. In terms of assembly, homodimer. Pyridoxal 5'-phosphate is required as a cofactor.

The protein localises to the cytoplasm. It catalyses the reaction (6R)-5,10-methylene-5,6,7,8-tetrahydrofolate + glycine + H2O = (6S)-5,6,7,8-tetrahydrofolate + L-serine. Its pathway is one-carbon metabolism; tetrahydrofolate interconversion. It functions in the pathway amino-acid biosynthesis; glycine biosynthesis; glycine from L-serine: step 1/1. Its function is as follows. Catalyzes the reversible interconversion of serine and glycine with tetrahydrofolate (THF) serving as the one-carbon carrier. This reaction serves as the major source of one-carbon groups required for the biosynthesis of purines, thymidylate, methionine, and other important biomolecules. Also exhibits THF-independent aldolase activity toward beta-hydroxyamino acids, producing glycine and aldehydes, via a retro-aldol mechanism. This chain is Serine hydroxymethyltransferase, found in Crocosphaera subtropica (strain ATCC 51142 / BH68) (Cyanothece sp. (strain ATCC 51142)).